We begin with the raw amino-acid sequence, 156 residues long: Small ribosomal subunit protein uS7 (156 aa).

Belongs to the universal ribosomal protein uS7 family. As to quaternary structure, part of the 30S ribosomal subunit. Contacts proteins S9 and S11.

Its function is as follows. One of the primary rRNA binding proteins, it binds directly to 16S rRNA where it nucleates assembly of the head domain of the 30S subunit. Is located at the subunit interface close to the decoding center, probably blocks exit of the E-site tRNA. The sequence is that of Small ribosomal subunit protein uS7 from Wigglesworthia glossinidia brevipalpis.